The following is an 87-amino-acid chain: U3-theraphotoxin-Hhn1a 3 (87 aa).

An N-terminal signal peptide occupies residues 1 to 24 (MVNMKASMFLTFAGLVLLFVVCYA). Residues 25-52 (PESEEKEFPKEMLSSIFAVDNDFKQEER) constitute a propeptide that is removed on maturation. Disulfide bonds link cysteine 54–cysteine 67, cysteine 61–cysteine 72, and cysteine 66–cysteine 79.

This sequence belongs to the neurotoxin 10 (Hwtx-1) family. 51 (Hntx-8) subfamily. Hntx-8 sub-subfamily. Expressed by the venom gland.

Its subcellular location is the secreted. In terms of biological role, ion channel inhibitor. This chain is U3-theraphotoxin-Hhn1a 3, found in Cyriopagopus hainanus (Chinese bird spider).